A 930-amino-acid chain; its full sequence is Vacuolar membrane protease (930 aa).

Residues 1-28 (MPQEEVHDTSSVSDDNLTNTGGGGSNYY) form a disordered region. The Cytoplasmic segment spans residues 1–49 (MPQEEVHDTSSVSDDNLTNTGGGGSNYYNSHNQPNVFVRAIRSIFGYRK). A helical transmembrane segment spans residues 50-70 (TSLTLFVILTIIFTIALSLYD). Topologically, residues 71 to 379 (NNLDLTIELP…YFFSSPISAL (309 aa)) are vacuolar. N-linked (GlcNAc...) asparagine glycosylation is present at N163. 2 residues coordinate Zn(2+): H177 and D189. Residue E222 is the Proton acceptor of the active site. E223, E248, and H320 together coordinate Zn(2+). An N-linked (GlcNAc...) asparagine glycan is attached at N354. A helical membrane pass occupies residues 380-400 (VTINSVLIVLFPILSGPLLFI). Residues 401–411 (TVRYKKWKIGT) lie on the Cytoplasmic side of the membrane. Residues 412–432 (SNFLSLPLAIVLTVAIVMIVV) traverse the membrane as a helical segment. The Vacuolar portion of the chain corresponds to 433–449 (NQGFQIANPFLPSSHPL). The helical transmembrane segment at 450–470 (LLVATTTSISLLIYYVFLNGV) threads the bilayer. Residues 471–480 (NWVSPSGDQK) lie on the Cytoplasmic side of the membrane. The chain crosses the membrane as a helical span at residues 481–501 (LITIIEISFIYWLILIYVTHG). The Vacuolar portion of the chain corresponds to 502–514 (LSQNKIGDDHTGE). Residues 515–535 (FPFTVLFFLEATASLFGLIGW) form a helical membrane-spanning segment. Residues 536–598 (TFSRSIKQSS…FGYDWSLQYL (63 aa)) are Cytoplasmic-facing. Positions 542 to 570 (KQSSNDGSDEPLLTGTAERYGSDDTDEDE) are disordered. Residues 599–619 (LIVPISSLIIFNSGWLVLDGI) form a helical membrane-spanning segment. Residue N620 is glycosylated (N-linked (GlcNAc...) asparagine). The Vacuolar segment spans residues 620–631 (NKSIQESFAAEN). Residues 632 to 652 (LIYLLIQLFSQFWILPILPFV) form a helical membrane-spanning segment. Residues 653–657 (YKLNR) are Cytoplasmic-facing. The chain crosses the membrane as a helical span at residues 658–678 (FIVFGLTIFAISGVALISFLD). Residues 679–930 (PFNQENPLKL…LVSVSLKIEV (252 aa)) are Vacuolar-facing. Residues N697, N768, N808, and N890 are each glycosylated (N-linked (GlcNAc...) asparagine).

The protein belongs to the peptidase M28 family. Zn(2+) serves as cofactor.

The protein localises to the vacuole membrane. Its function is as follows. May be involved in vacuolar sorting and osmoregulation. This chain is Vacuolar membrane protease, found in Candida dubliniensis (strain CD36 / ATCC MYA-646 / CBS 7987 / NCPF 3949 / NRRL Y-17841) (Yeast).